Here is a 238-residue protein sequence, read N- to C-terminus: uncharacterized protein (238 aa).

This sequence belongs to the chlamydial CPn_0658/CT_538/TC_0825 family.

This is an uncharacterized protein from Chlamydia trachomatis serovar D (strain ATCC VR-885 / DSM 19411 / UW-3/Cx).